Here is a 2375-residue protein sequence, read N- to C-terminus: Talin-2 (2375 aa).

In terms of domain architecture, FERM spans 88 to 406 (RPQKIRMLDG…GYIDIILKKK (319 aa)). The segment at 312-406 (GVSFFLVKEK…GYIDIILKKK (95 aa)) is interaction with PIP5K1C. Phosphoserine occurs at positions 428, 450, 624, and 1024. Y1666 carries the phosphotyrosine modification. The region spanning 2205–2375 (TEWVDPEDPT…KRLQAAGNAV (171 aa)) is the I/LWEQ domain.

In terms of assembly, interacts directly with PIP5K1C.

Its subcellular location is the cytoplasm. It is found in the cell junction. It localises to the focal adhesion. The protein resides in the synapse. The protein localises to the cell membrane. Its subcellular location is the cytoskeleton. Its function is as follows. As a major component of focal adhesion plaques that links integrin to the actin cytoskeleton, may play an important role in cell adhesion. Recruits PIP5K1C to focal adhesion plaques and strongly activates its kinase activity. This is Talin-2 (Tln2) from Mus musculus (Mouse).